The sequence spans 776 residues: Glucocorticoid receptor (776 aa).

Residues 1–11 are compositionally biased toward polar residues; the sequence is MDSKESLTSPS. The interval 1-25 is disordered; the sequence is MDSKESLTSPSEEIPSSVHGQERGN. The tract at residues 1-419 is modulating; that stretch reads MDSKESLTSP…LSAVGPPPKF (419 aa). Residue Thr8 is modified to Phosphothreonine. At Arg23 the chain carries Omega-N-methylarginine. Phosphoserine occurs at positions 45, 113, and 134. The interval 157–178 is disordered; it reads PETPSDVSSEQQNLKGQTGTNG. Over residues 161–174 the composition is skewed to polar residues; that stretch reads SDVSSEQQNLKGQT. Phosphoserine is present on residues Ser203, Ser211, and Ser226. A Glycyl lysine isopeptide (Lys-Gly) (interchain with G-Cter in SUMO2) cross-link involves residue Lys258. Phosphoserine is present on Ser267. Residues Lys277 and Lys293 each participate in a glycyl lysine isopeptide (Lys-Gly) (interchain with G-Cter in SUMO); alternate cross-link. Residues Lys277 and Lys293 each participate in a glycyl lysine isopeptide (Lys-Gly) (interchain with G-Cter in SUMO2); alternate cross-link. A phosphoserine mark is found at Ser307 and Ser404. The nuclear receptor DNA-binding region spans 417 to 492; it reads PKFCLVCSDE…AGMNLEARKT (76 aa). A Glycyl lysine isopeptide (Lys-Gly) (interchain with G-Cter in ubiquitin) cross-link involves residue Lys418. NR C4-type zinc fingers lie at residues 420–440 and 456–480; these read CLVCSDEASGCHYGVLTCGSC and CAGRNDCIIDKIRRKNCPACRYRKC. Residues Lys479, Lys491, Lys493, and Lys494 each carry the N6-acetyllysine modification. The interval 484–776 is interaction with CLOCK; sequence GMNLEARKTK…NIKKLLFHQK (293 aa). The hinge stretch occupies residues 486–522; that stretch reads NLEARKTKKKIKGIQQTTTGISQETPENSANKTIVPA. Residues 523-757 enclose the NR LBD domain; that stretch reads TLPQLTPTPV…FPEMLAEIIT (235 aa). Residues 531 to 696 form an interaction with CRY1 region; that stretch reads PVSLLEVIEP…EIRMTYIKEL (166 aa). Lys702 is covalently cross-linked (Glycyl lysine isopeptide (Lys-Gly) (interchain with G-Cter in SUMO)).

It belongs to the nuclear hormone receptor family. NR3 subfamily. In terms of assembly, heteromultimeric cytoplasmic complex with HSP90AA1, HSPA1A/HSPA1B, and FKBP5 or another immunophilin such as PPID, STIP1, or the immunophilin homolog PPP5C. Upon ligand binding FKBP5 dissociates from the complex and FKBP4 takes its place, thereby linking the complex to dynein and mediating transport to the nucleus, where the complex dissociates. Probably forms a complex composed of chaperones HSP90 and HSP70, co-chaperones CDC37, PPP5C, TSC1 and client protein TSC2, CDK4, AKT, RAF1 and NR3C1; this complex does not contain co-chaperones STIP1/HOP and PTGES3/p23. Directly interacts with UNC45A. Binds to DNA as a homodimer, and as heterodimer with NR3C2 or the retinoid X receptor. Binds STAT5A and STAT5B homodimers and heterodimers. Interacts with NRIP1, POU2F1, POU2F2 and TRIM28. Interacts with several coactivator complexes, including the SMARCA4 complex, CREBBP/EP300, TADA2L (Ada complex) and p160 coactivators such as NCOA2 and NCOA6. Interaction with BAG1 inhibits transactivation. Interacts with HEXIM1 and TGFB1I1. Interacts with NCOA1. Interacts with NCOA3, SMARCA4, SMARCC1, SMARCD1, and SMARCE1. Interacts with CLOCK, CRY1 and CRY2 in a ligand-dependent fashion. Interacts with CIART. Interacts with RWDD3. Interacts with UBE2I/UBC9 and this interaction is enhanced in the presence of RWDD3. Interacts with GRIP1. Interacts with NR4A3 (via nuclear receptor DNA-binding domain), represses transcription activity of NR4A3 on the POMC promoter Nur response element (NurRE). Directly interacts with PNRC2 to attract and form a complex with UPF1 and DCP1A; the interaction leads to rapid mRNA degradation. Interacts with GSK3B. Interacts with FNIP1 and FNIP2. Interacts (via C-terminus) with NR3C1 (via C-terminus). Interacts with MCM3AP. Interacts (via domain NR LBD) with HSP90AA1 and HSP90AB1. In the absence of hormonal ligand, interacts with TACC1. Post-translationally, acetylation by CLOCK reduces its binding to glucocorticoid response elements and its transcriptional activity. Increased proteasome-mediated degradation in response to glucocorticoids. In terms of processing, phosphorylated in the absence of hormone; becomes hyperphosphorylated in the presence of glucocorticoid. The Ser-203, Ser-226 and Ser-404-phosphorylated forms are mainly cytoplasmic, and the Ser-211-phosphorylated form is nuclear. Phosphorylation at Ser-211 increases transcriptional activity. Phosphorylation at Ser-203, Ser-226 and Ser-404 decreases signaling capacity. Phosphorylation at Ser-404 may protect from glucocorticoid-induced apoptosis. Phosphorylation at Ser-203 and Ser-211 is not required in regulation of chromosome segregation. May be dephosphorylated by PPP5C, attenuates NR3C1 action. Post-translationally, sumoylation at Lys-277 and Lys-293 negatively regulates its transcriptional activity. Sumoylation at Lys-702 positively regulates its transcriptional activity in the presence of RWDD3. Sumoylation at Lys-277 and Lys-293 is dispensable whereas sumoylation at Lys-702 is critical for the stimulatory effect of RWDD3 on its transcriptional activity. Heat shock increases sumoylation in a RWDD3-dependent manner. Ubiquitinated by UBR5, leading to its degradation: UBR5 specifically recognizes and binds ligand-bound NR3C1 when it is not associated with coactivators (NCOAs). In presence of NCOAs, the UBR5-degron is not accessible, preventing its ubiquitination and degradation.

It localises to the cytoplasm. The protein localises to the nucleus. The protein resides in the mitochondrion. It is found in the cytoskeleton. Its subcellular location is the spindle. It localises to the microtubule organizing center. The protein localises to the centrosome. The protein resides in the chromosome. It is found in the nucleoplasm. Its function is as follows. Receptor for glucocorticoids (GC). Has a dual mode of action: as a transcription factor that binds to glucocorticoid response elements (GRE), both for nuclear and mitochondrial DNA, and as a modulator of other transcription factors. Affects inflammatory responses, cellular proliferation and differentiation in target tissues. Involved in chromatin remodeling. Plays a role in rapid mRNA degradation by binding to the 5' UTR of target mRNAs and interacting with PNRC2 in a ligand-dependent manner which recruits the RNA helicase UPF1 and the mRNA-decapping enzyme DCP1A, leading to RNA decay. Could act as a coactivator for STAT5-dependent transcription upon growth hormone (GH) stimulation and could reveal an essential role of hepatic GR in the control of body growth. Mediates glucocorticoid-induced apoptosis. Promotes accurate chromosome segregation during mitosis. May act as a tumor suppressor. May play a negative role in adipogenesis through the regulation of lipolytic and antilipogenic gene expression. The protein is Glucocorticoid receptor (NR3C1) of Tupaia belangeri (Common tree shrew).